The chain runs to 377 residues: Cytochrome c peroxidase, mitochondrial (377 aa).

A mitochondrion-targeting transit peptide spans 1 to 17; that stretch reads MSFRAPNLIRSAAGRRA. His-138 (proton acceptor) is an active-site residue. His-261 is a binding site for heme b. Residue Trp-277 is the Tryptophan radical intermediate of the active site.

This sequence belongs to the peroxidase family. Cytochrome c peroxidase subfamily. Forms a one-to-one complex with cytochrome c. Heme b is required as a cofactor.

The protein localises to the mitochondrion matrix. It is found in the mitochondrion intermembrane space. It catalyses the reaction 2 Fe(II)-[cytochrome c] + H2O2 + 2 H(+) = 2 Fe(III)-[cytochrome c] + 2 H2O. In terms of biological role, destroys radicals which are normally produced within the cells and which are toxic to biological systems. This Cryptococcus neoformans var. neoformans serotype D (strain JEC21 / ATCC MYA-565) (Filobasidiella neoformans) protein is Cytochrome c peroxidase, mitochondrial (CCP1).